Consider the following 639-residue polypeptide: Protein P1 (639 aa).

Positions 1–20 (MNRFTAYAALFFIFSLCSTA) are cleaved as a signal peptide. Transmembrane regions (helical) follow at residues 121–141 (AASV…WTLA), 144–164 (ITLF…LGCI), and 172–192 (ALSL…KIIW). The Peptidase S39 domain maps to 207 to 399 (VEGYKGFSVP…GITSPNYVFE (193 aa)). Catalysis depends on for protease activity residues His-255, Asp-286, and Ser-354. 2 disordered regions span residues 456-510 (TNAP…AAIS) and 542-639 (VSQK…NSKA). Residues 463–487 (TAQTNSAEKTAPSTSAEKTAPTNKP) are compositionally biased toward polar residues. A compositionally biased stretch (basic residues) spans 551 to 561 (KQNKRGRRGGK). Over residues 562–576 (NKQNNLPPTSTQSIS) the composition is skewed to polar residues.

Belongs to the peptidase S39B family. Post-translationally, specific enzymatic cleavages in vivo yield mature proteins. The protease probably cleaves itself and releases the VPg protein. The VPg protein is probably further cleaved in its C-terminus.

It is found in the membrane. Functionally, precursor from which the VPg molecule is probably released at the onset of the RNA synthesis. Essential for virus replication. In Solanum tuberosum (Potato), this protein is Protein P1.